The following is a 429-amino-acid chain: RNA-binding protein BRN2 (429 aa).

RRM domains lie at 12 to 93 (VKLF…YADG), 100 to 180 (HKLF…WADT), and 330 to 408 (ANLF…LKRD). The interval 410 to 429 (GQQQQQQQSKNPLFNGLLNS) is disordered. Polar residues predominate over residues 418–429 (SKNPLFNGLLNS).

As to expression, expressed in roots, stems, flowers and siliques.

Its subcellular location is the cytoplasm. Functionally, RNA-binding protein involved in the regulation of flowering time. Acts as a repressor of the activity of SOC1, a transcriptional activator of flowering time. Binds to the 3'-UTR of SOC1 mRNA in the cytoplasm and participates in SOC1 mRNA decay, mediated by the distal region of the SOC1 3'-UTR. The chain is RNA-binding protein BRN2 from Arabidopsis thaliana (Mouse-ear cress).